The primary structure comprises 116 residues: Translation initiation factor 1A (116 aa).

A disordered region spans residues 1-25 (MRCLSKKHQKQGDEHGGEIPLPNPD). The S1-like domain maps to 17–91 (GEIPLPNPDE…EKGEVVYKYG (75 aa)).

It belongs to the eIF-1A family.

Seems to be required for maximal rate of protein biosynthesis. Enhances ribosome dissociation into subunits and stabilizes the binding of the initiator Met-tRNA(I) to 40 S ribosomal subunits. The sequence is that of Translation initiation factor 1A (eIF1A) from Desulfurococcus amylolyticus (strain DSM 18924 / JCM 16383 / VKM B-2413 / 1221n) (Desulfurococcus kamchatkensis).